A 186-amino-acid polypeptide reads, in one-letter code: Protein GrpE (186 aa).

Residues Met-1–Gln-15 show a composition bias toward polar residues. The tract at residues Met-1–Ala-20 is disordered.

This sequence belongs to the GrpE family. As to quaternary structure, homodimer.

It is found in the cytoplasm. Functionally, participates actively in the response to hyperosmotic and heat shock by preventing the aggregation of stress-denatured proteins, in association with DnaK and GrpE. It is the nucleotide exchange factor for DnaK and may function as a thermosensor. Unfolded proteins bind initially to DnaJ; upon interaction with the DnaJ-bound protein, DnaK hydrolyzes its bound ATP, resulting in the formation of a stable complex. GrpE releases ADP from DnaK; ATP binding to DnaK triggers the release of the substrate protein, thus completing the reaction cycle. Several rounds of ATP-dependent interactions between DnaJ, DnaK and GrpE are required for fully efficient folding. The chain is Protein GrpE from Pseudomonas aeruginosa (strain UCBPP-PA14).